The chain runs to 150 residues: UPF0260 protein PputGB1_4117 (150 aa).

This sequence belongs to the UPF0260 family.

The sequence is that of UPF0260 protein PputGB1_4117 from Pseudomonas putida (strain GB-1).